A 447-amino-acid polypeptide reads, in one-letter code: MDLSAAAALCLWLLSACRPRDGLEAAAVLRAAGAGPVRSPGGGGGGGRTLAQAAGAAAVPAAAVSRARAPRRAAGSGFRNGSVVPHHFMMSLYRSLAGRAPAGAVAVSSSGHGRADTITGFTDQATQDESAAETGQSFLFDVSSLNDADEVVGAELRVLRRGSPEPGPGSSTSPPLLLLSTCPGAARAPRLLYSRAAEPLVGQRWEVFDVADAMRRHRREPRPPRAFCLLLRAVTGPVRSPLALRRLGFGWPGGGGSAPEERALLVVSSRTQRKESLFREMRAQARALGAALAAQPPPDPGTGTGSPRAVTAGRRRRRTALAGTRTAQGSGGGAGRGHGRRGRSRCSRKPLHVDFKELGWDDWIIAPLDYEAYHCEGVCDFPLRSHLEPTNHAIIQTLLNSMAPDAAPASCCVPARLSPISILYIDAANNVVYKQYEDMVVEACGCR.

The first 19 residues, 1-19, serve as a signal peptide directing secretion; sequence MDLSAAAALCLWLLSACRP. Residues 20–318 constitute a propeptide that is removed on maturation; sequence RDGLEAAAVL…AVTAGRRRRR (299 aa). Asparagine 80 carries N-linked (GlcNAc...) asparagine glycosylation. The segment at 292–346 is disordered; sequence LAAQPPPDPGTGTGSPRAVTAGRRRRRTALAGTRTAQGSGGGAGRGHGRRGRSRC. Residues 337 to 346 are compositionally biased toward basic residues; it reads GHGRRGRSRC. 3 disulfides stabilise this stretch: cysteine 346/cysteine 412, cysteine 375/cysteine 444, and cysteine 379/cysteine 446.

This sequence belongs to the TGF-beta family. Homodimer; disulfide-linked. In terms of tissue distribution, highly expressed in the primary aera of brain neocortex.

The protein localises to the secreted. Its function is as follows. May play an active role in the motor area of the primate neocortex. This is Growth/differentiation factor 7 (GDF7) from Chlorocebus aethiops (Green monkey).